A 469-amino-acid chain; its full sequence is Origin recognition complex subunit 6 (469 aa).

Composition is skewed to low complexity over residues 218–234 (SSTL…TAPK) and 275–308 (ATPT…LSST). 4 disordered regions span residues 218 to 241 (SSTL…PIPS), 275 to 309 (ATPT…SSTN), 356 to 423 (ESPF…EGDL), and 436 to 469 (KEQQ…SFFK). 2 stretches are compositionally biased toward basic and acidic residues: residues 380 to 390 (SRDELEKESEL) and 409 to 423 (QKEK…EGDL). A compositionally biased stretch (polar residues) spans 454 to 469 (TPVNATKQLTLDSFFK).

The protein belongs to the ORC6 family. As to quaternary structure, ORC is composed of six subunits.

It localises to the nucleus. Its function is as follows. Component of the origin recognition complex (ORC) that binds origins of replication. DNA-binding is ATP-dependent, however specific DNA sequences that define origins of replication have not been identified so far. ORC is required to assemble the pre-replication complex necessary to initiate DNA replication. The polypeptide is Origin recognition complex subunit 6 (orcF) (Dictyostelium discoideum (Social amoeba)).